Reading from the N-terminus, the 61-residue chain is Potassium channel toxin alpha-KTx 6.6 (61 aa).

Residues 1–23 form the signal peptide; sequence MNAKFILLLLVVATTMLLPDTQG. 4 disulfides stabilise this stretch: Cys29/Cys50, Cys35/Cys55, Cys39/Cys57, and Cys45/Cys60. At Cys60 the chain carries Cysteine amide.

Belongs to the short scorpion toxin superfamily. Potassium channel inhibitor family. Alpha-KTx 06 subfamily. Expressed by the venom gland.

It localises to the secreted. Blocker of voltage-gated potassium channels. This is Potassium channel toxin alpha-KTx 6.6 from Opistophthalmus carinatus (African yellow leg scorpion).